The sequence spans 525 residues: Ent-kaurene oxidase (525 aa).

Residues 31–51 form a helical membrane-spanning segment; sequence VHWLIYVAFGAWLCSYVIHVL. Residue C466 coordinates heme.

This sequence belongs to the cytochrome P450 family. Heme serves as cofactor.

It localises to the membrane. It catalyses the reaction ent-kaur-16-ene + 3 reduced [NADPH--hemoprotein reductase] + 3 O2 = ent-kaur-16-en-19-oate + 3 oxidized [NADPH--hemoprotein reductase] + 4 H2O + 4 H(+). Its pathway is plant hormone biosynthesis; gibberellin biosynthesis. Functionally, catalyzes three successive oxidations of the 4-methyl group of ent-kaurene giving kaurenoic acid, a key step in gibberellin (GA) biosynthesis. The sequence is that of Ent-kaurene oxidase (CYP503A1) from Gibberella intermedia (Bulb rot disease fungus).